A 254-amino-acid chain; its full sequence is MSKPWLFTVHGTGQPDPLGPGLPADTARDVLDIYRWQPIGNYPAAAFPMWPSVEKGVAELILQIELKLDADPYADFAMAGYSQGAIVVGQVLKHHILPPTGRLHRFLHRLKKVIFWGNPMRQKGFAHSDEWIHPVAAPDTLGILEDRLENLEQYGFEVRDYAHDGDMYASIKEDDLHEYEVAIGRIVMKASGFIGGRDSVVAQLIELGQRPITEGIALAGAIIDALTFFARSRMGDKWPHLYNRYPAVEFLRQI.

Catalysis depends on residues Ser82, Asp166, and His240.

The protein belongs to the L5likevirus endolysin B protein family.

Functionally, endolysin that degrades the junction between mycolic acid and peptidoglycans in the host cell wall and participates with the holin protein in the sequential events which lead to the programmed host cell lysis releasing the mature viral particles. Once the holin has permeabilized the host cell membrane, the endolysin can reach the periplasm and break down the mycolic acid-rich outer membrane. Cleaves the ester linkage joining the mycolic acid-rich outer membrane to arabinogalactan, releasing free mycolic acids. This is Endolysin B (12) from Mycobacterium phage D29 (Mycobacteriophage D29).